We begin with the raw amino-acid sequence, 508 residues long: Photosystem II CP47 reaction center protein (508 aa).

Helical transmembrane passes span 21–36 (AVHIMHTALVSGWAGS), 101–115 (IILSGLLFLAAIWHW), 140–156 (GIHLFLSGLLCFGFGAF), 203–218 (IAAGILGILAGLFHLS), 237–252 (VLSSSIAAVFWAAFVV), and 457–472 (NFALLFFFGHIWHGGR).

Belongs to the PsbB/PsbC family. PsbB subfamily. In terms of assembly, PSII is composed of 1 copy each of membrane proteins PsbA, PsbB, PsbC, PsbD, PsbE, PsbF, PsbH, PsbI, PsbJ, PsbK, PsbL, PsbM, PsbT, PsbX, PsbY, PsbZ, Psb30/Ycf12, at least 3 peripheral proteins of the oxygen-evolving complex and a large number of cofactors. It forms dimeric complexes. It depends on Binds multiple chlorophylls. PSII binds additional chlorophylls, carotenoids and specific lipids. as a cofactor.

The protein resides in the plastid. It localises to the chloroplast thylakoid membrane. Functionally, one of the components of the core complex of photosystem II (PSII). It binds chlorophyll and helps catalyze the primary light-induced photochemical processes of PSII. PSII is a light-driven water:plastoquinone oxidoreductase, using light energy to abstract electrons from H(2)O, generating O(2) and a proton gradient subsequently used for ATP formation. The sequence is that of Photosystem II CP47 reaction center protein from Chaetosphaeridium globosum (Charophycean green alga).